Consider the following 567-residue polypeptide: DNA ligase B (567 aa).

The N6-AMP-lysine intermediate role is filled by Lys132.

It belongs to the NAD-dependent DNA ligase family. LigB subfamily.

The catalysed reaction is NAD(+) + (deoxyribonucleotide)n-3'-hydroxyl + 5'-phospho-(deoxyribonucleotide)m = (deoxyribonucleotide)n+m + AMP + beta-nicotinamide D-nucleotide.. Catalyzes the formation of phosphodiester linkages between 5'-phosphoryl and 3'-hydroxyl groups in double-stranded DNA using NAD as a coenzyme and as the energy source for the reaction. The protein is DNA ligase B of Yersinia pseudotuberculosis serotype IB (strain PB1/+).